Consider the following 642-residue polypeptide: Threonine--tRNA ligase (642 aa).

Residues 1–61 (MPVITLPDGS…ENDATLAIIT (61 aa)) enclose the TGS domain. The tract at residues 243–534 (DHRKIGKQLD…LTEEFAGFFP (292 aa)) is catalytic. Residues Cys-334, His-385, and His-511 each contribute to the Zn(2+) site.

Belongs to the class-II aminoacyl-tRNA synthetase family. Homodimer. It depends on Zn(2+) as a cofactor.

The protein localises to the cytoplasm. It carries out the reaction tRNA(Thr) + L-threonine + ATP = L-threonyl-tRNA(Thr) + AMP + diphosphate + H(+). Its function is as follows. Catalyzes the attachment of threonine to tRNA(Thr) in a two-step reaction: L-threonine is first activated by ATP to form Thr-AMP and then transferred to the acceptor end of tRNA(Thr). Also edits incorrectly charged L-seryl-tRNA(Thr). In Salmonella dublin (strain CT_02021853), this protein is Threonine--tRNA ligase.